Consider the following 297-residue polypeptide: Inosose dehydratase (297 aa).

Belongs to the IolE/MocC family. Glutathione serves as cofactor. The cofactor is Co(2+). Requires Mn(2+) as cofactor.

The catalysed reaction is scyllo-inosose = 3D-3,5/4-trihydroxycyclohexane-1,2-dione + H2O. It participates in polyol metabolism; myo-inositol degradation into acetyl-CoA; acetyl-CoA from myo-inositol: step 2/7. In terms of biological role, catalyzes the dehydration of inosose (2-keto-myo-inositol, 2KMI or 2,4,6/3,5-pentahydroxycyclohexanone) to 3D-(3,5/4)-trihydroxycyclohexane-1,2-dione (D-2,3-diketo-4-deoxy-epi-inositol). This Clostridium perfringens (strain 13 / Type A) protein is Inosose dehydratase.